A 561-amino-acid chain; its full sequence is Asparagine synthetase [glutamine-hydrolyzing] (561 aa).

C2 (for GATase activity) is an active-site residue. Positions 2 to 191 constitute a Glutamine amidotransferase type-2 domain; it reads CGIWALFGSD…PGHYEVLDLK (190 aa). L-glutamine contacts are provided by residues 49–53, 75–77, and D97; these read RLAVV and NGE. The Asparagine synthetase domain occupies 213–536; that stretch reads HALYDSVEKL…PGRADWLTHY (324 aa). ATP contacts are provided by residues L256, I288, and 363-364; that span reads SG. At K385 the chain carries N6-acetyllysine. T545 carries the post-translational modification Phosphothreonine. S557 is modified (phosphoserine).

The enzyme catalyses L-aspartate + L-glutamine + ATP + H2O = L-asparagine + L-glutamate + AMP + diphosphate + H(+). It functions in the pathway amino-acid biosynthesis; L-asparagine biosynthesis; L-asparagine from L-aspartate (L-Gln route): step 1/1. This Cricetulus griseus (Chinese hamster) protein is Asparagine synthetase [glutamine-hydrolyzing] (ASNS).